We begin with the raw amino-acid sequence, 204 residues long: Large ribosomal subunit protein uL18 (204 aa).

This sequence belongs to the universal ribosomal protein uL18 family. As to quaternary structure, part of the 50S ribosomal subunit. Contacts the 5S and 23S rRNAs.

This is one of the proteins that bind and probably mediate the attachment of the 5S RNA into the large ribosomal subunit, where it forms part of the central protuberance. This is Large ribosomal subunit protein uL18 from Ignicoccus hospitalis (strain KIN4/I / DSM 18386 / JCM 14125).